A 336-amino-acid chain; its full sequence is Probable G-protein coupled receptor 82 (336 aa).

The Extracellular portion of the chain corresponds to 1–11 (MNNNTTCIQPS). Residues N3 and N4 are each glycosylated (N-linked (GlcNAc...) asparagine). Residues 12–32 (MISSMALPIIYILLCIVGVFG) traverse the membrane as a helical segment. At 33-55 (NTLSQWIFLTKIGKKTSTHIYLS) the chain is on the cytoplasmic side. The helical transmembrane segment at 56-76 (HLVTANLLVCSAMPFMSIYFL) threads the bilayer. Residues 77 to 92 (KGFQWEYQSAQCRVVN) are Extracellular-facing. The chain crosses the membrane as a helical span at residues 93-115 (FLGTLSMHASMFVSLLILSWIAI). Residues 116 to 156 (SRYATLMQKDSSQETTSCYEKIFYGHLLKKFRQPNFARKLC) lie on the Cytoplasmic side of the membrane. Residues 157 to 177 (IYIWGVVLGIIIPVTVYYSVI) traverse the membrane as a helical segment. Residues 178-197 (EATEGEESLCYNRQMELGAM) are Extracellular-facing. A helical membrane pass occupies residues 198-218 (ISQIAGLIGTTFIGFSFLVVL). The Cytoplasmic segment spans residues 219–251 (TSYYSFVSHLRKIRTCTSIMEKDLTYSSVKRHL). The helical transmembrane segment at 252-272 (LVIQILLIVCFLPYSIFKPIF) threads the bilayer. The Extracellular segment spans residues 273 to 336 (YVLHQRDNCQ…SNSAHMQSYG (64 aa)).

This sequence belongs to the G-protein coupled receptor 1 family.

It localises to the cell membrane. Orphan receptor. In Homo sapiens (Human), this protein is Probable G-protein coupled receptor 82 (GPR82).